We begin with the raw amino-acid sequence, 130 residues long: Vascular-related unknown protein 3 (130 aa).

Residues 45–81 (DDSSMMSDAASPMGCVEEDTASSPSNRTEGYSGMEDN) form a disordered region.

Functionally, involved in the regulation of plant growth. This chain is Vascular-related unknown protein 3, found in Arabidopsis thaliana (Mouse-ear cress).